We begin with the raw amino-acid sequence, 355 residues long: MSYKLLIINPGSTSTKIGVYENEKELFEETLRHTNEEIKRYETIYDQFQFRKDVILNILKEKNFDITTLSAIVGRGGMLKPVEGGTYAVNDAMIEDLKVGVQGPHASNLGGIIAKSIGDELNIPSFIVDPVVTDELDDVARLSGVPELPRKSKFHALNQKAVAKRYGKDSGKGYENLNLIVVHMGGGVSVGAHKQGKVVDVNNALDGDGPFSPERAGTVPVGDLIKMCFSGQYTESEVYTKVVGKGGFVGYLNTNDVKGVIDNMEAGDKDCEKIYKAFLYQITKTIGEMAAALNGKVDQILLTGGIAYSPTLVPDLKSNVEWIAPVTVYPGEDELLALAQGAIRVLDGEEKAKIY.

This sequence belongs to the acetokinase family.

It localises to the cytoplasm. It carries out the reaction butanoate + ATP = butanoyl phosphate + ADP. The sequence is that of Probable butyrate kinase from Clostridium botulinum (strain Eklund 17B / Type B).